A 956-amino-acid chain; its full sequence is Glutamate receptor ionotropic, kainate 4 (956 aa).

Residues 1-20 (MPRVSAPLVLLPAWLLMVAC) form the signal peptide. The Extracellular segment spans residues 21 to 545 (SPHSLRIAAI…YFSSLDPFSP (525 aa)). 8 N-linked (GlcNAc...) asparagine glycosylation sites follow: Asn-158, Asn-220, Asn-272, Asn-286, Asn-323, Asn-408, Asn-415, and Asn-479. L-glutamate contacts are provided by Gly-500, Thr-502, and Arg-507. The chain crosses the membrane as a helical span at residues 546–566 (GVWLFMLLAYLAVSCVLFLVA). Residues 567-623 (RLTPYEWYSPHPCAQGRCNLLVNQYSLGNSLWFPVGGFMQQGSTIAPRALSTRCVSG) are Cytoplasmic-facing. The chain crosses the membrane as a helical span at residues 624–644 (VWWAFTLIIISSYTANLAAFL). Over 645-804 (TVQRMEVPIE…HRAKGLGMEN (160 aa)) the chain is Extracellular. The L-glutamate site is built by Ser-674, Ser-675, and Glu-723. Residue Asn-736 is glycosylated (N-linked (GlcNAc...) asparagine). Residues 805 to 825 (IGGIFVVLICGLIVAIFMAML) traverse the membrane as a helical segment. The Cytoplasmic segment spans residues 826 to 956 (EFLWTLRHSE…DKTTNSSEPE (131 aa)). The disordered stretch occupies residues 931 to 956 (LRARPSPARSEESLEWDKTTNSSEPE). Over residues 939–948 (RSEESLEWDK) the composition is skewed to basic and acidic residues.

It belongs to the glutamate-gated ion channel (TC 1.A.10.1) family. GRIK4 subfamily. As to quaternary structure, homodimer. Can form functional heteromeric receptors with GRIK1, GRIK2 and GRIK3. As to expression, strong expression in hippocampal CA3 pyramidal cells. Low expression in hippocampal dentate granule cells, in layers II, V and VI of the cortex, and in cerebellar Purkinje cells. No expression in the striatum, reticular thalamus, hypothalamus or amygdaloid complex.

Its subcellular location is the cell membrane. The protein resides in the postsynaptic cell membrane. The protein localises to the presynaptic cell membrane. In terms of biological role, ionotropic glutamate receptor that functions as a cation-permeable ligand-gated ion channel, gated by L-glutamate and the glutamatergic agonist kainic acid. Cannot form functional channels on its own and shows channel activity only in heteromeric assembly with GRIK1, GRIK2 and GRIK3 subunits. The sequence is that of Glutamate receptor ionotropic, kainate 4 (Grik4) from Rattus norvegicus (Rat).